A 465-amino-acid polypeptide reads, in one-letter code: Cysteine--tRNA ligase (465 aa).

Cys30 serves as a coordination point for Zn(2+). Residues 32-42 carry the 'HIGH' region motif; it reads ITVYDYCHVGH. Positions 214, 239, and 243 each coordinate Zn(2+). A 'KMSKS' region motif is present at residues 271-275; it reads KMSKS. Lys274 serves as a coordination point for ATP.

It belongs to the class-I aminoacyl-tRNA synthetase family. As to quaternary structure, monomer. It depends on Zn(2+) as a cofactor.

Its subcellular location is the cytoplasm. The enzyme catalyses tRNA(Cys) + L-cysteine + ATP = L-cysteinyl-tRNA(Cys) + AMP + diphosphate. This Burkholderia ambifaria (strain MC40-6) protein is Cysteine--tRNA ligase.